Reading from the N-terminus, the 1059-residue chain is MPKRTDIHKIMVIGSGPIIIGQAAEFDYSGTQACLALKEEGYETVLVNSNPATIMTDKGIADHVYIEPLTVAALTRILRQEAPDVLLPTLGGQIGLNLAVALSKTGILDELGIELLGTKLASIDQAEDREKFKELMQELGEPVPASLTVSTVEQALAFAKTVGYPVIVRPAFTMGGTGGGLANNEAELAEIAKNGLELSPATQCLIEKSIAGYKEIEFEVMRDAADNTMVVCCMENFDPVGIHTGDSIVFAPSQTLADREYQRLRDCALKLISALKIEGGCNVQLALDPNSYDYNVIEVNPRVSRSSALASKATGYPIAKLAAKIAVGLTLDEIKNPVTKTTYAEFEPALDYVVVKIPRWPFDKFTKADRRLGSQMKATGEVMAIGRTAEEALLKAVASLEIDQKDLLSKEAAAASDRQLEDKLVHAQDDRLFYIAEAFRRGYSLADLHELTRINHYFLDIVAGLVEEEGRIKAAGLDKEVIYEAKRDGFADTTLATLLGQNPAAIRAFRKANGIVPVYKMVDTCAAEFDSATPYFYSTYETENESRRSAKPSVLVIGSGPIRIGQGVEFDYATVHCVRALQKLGYEAIVINSNPETVSTDFSVSDKLYFEPLTLENVLNVTDLEQPVGAIVQFGGQTAINLASGLEANGVKILGTTVADLDAAEDRELFDQVIKDLNLRQPIGMTATTRQGVLDAAKEIGYPVLVRPSYVLGGKAMEIVYGQAELEDYLNQNADVTGSHPILVDAYLEGAECEVDAICDGERVLLPGIMEHIEHAGVHSGDSMAVYPPQSLSGAVKVQIEEATKKLAVALKCVGIMNIQFIIHDGQAYVLEVNPRASRTVPFLSKVTGIEMAQLATKVILGHSLAEQGYRSGLAPESQMIHVKAPVFSFSKLGDVDSYLGPEMKSTGEVMGSDTTYEKALYKAFAGAGMEVPDNGAVLLTIEDNDKAQILPLAKRFLAIGYRILATSGTAAFLEENGLHPTVVAKLHEQGQPAILDVIKDKHVDLVINTMGHDDEKNSDGFIIRQTAIEHHVPLLTALDTVNALLRSLEMTSFKTTEL.

The segment at 1–401 (MPKRTDIHKI…ALLKAVASLE (401 aa)) is carboxyphosphate synthetic domain. 12 residues coordinate ATP: Arg129, Arg169, Gly175, Gly176, Lys208, Ile210, Glu215, Gly241, Ile242, His243, Gln284, and Glu298. The ATP-grasp 1 domain occupies 133-327 (KELMQELGEP…IAKLAAKIAV (195 aa)). Mg(2+) is bound by residues Gln284, Glu298, and Asn300. The Mn(2+) site is built by Gln284, Glu298, and Asn300. The tract at residues 402 to 546 (IDQKDLLSKE…YSTYETENES (145 aa)) is oligomerization domain. The tract at residues 547-929 (RRSAKPSVLV…ALYKAFAGAG (383 aa)) is carbamoyl phosphate synthetic domain. The ATP-grasp 2 domain occupies 671-861 (DQVIKDLNLR…MAQLATKVIL (191 aa)). The ATP site is built by Arg707, Ala746, Leu748, Glu752, Gly777, Val778, His779, Ser780, Gln820, and Glu832. Positions 820, 832, and 834 each coordinate Mg(2+). Mn(2+) contacts are provided by Gln820, Glu832, and Asn834. The MGS-like domain maps to 930-1059 (MEVPDNGAVL…EMTSFKTTEL (130 aa)). The interval 930–1059 (MEVPDNGAVL…EMTSFKTTEL (130 aa)) is allosteric domain.

It belongs to the CarB family. As to quaternary structure, composed of two chains; the small (or glutamine) chain promotes the hydrolysis of glutamine to ammonia, which is used by the large (or ammonia) chain to synthesize carbamoyl phosphate. Tetramer of heterodimers (alpha,beta)4. The cofactor is Mg(2+). Mn(2+) serves as cofactor.

It catalyses the reaction hydrogencarbonate + L-glutamine + 2 ATP + H2O = carbamoyl phosphate + L-glutamate + 2 ADP + phosphate + 2 H(+). The catalysed reaction is hydrogencarbonate + NH4(+) + 2 ATP = carbamoyl phosphate + 2 ADP + phosphate + 2 H(+). It functions in the pathway amino-acid biosynthesis; L-arginine biosynthesis; carbamoyl phosphate from bicarbonate: step 1/1. The protein operates within pyrimidine metabolism; UMP biosynthesis via de novo pathway; (S)-dihydroorotate from bicarbonate: step 1/3. Large subunit of the glutamine-dependent carbamoyl phosphate synthetase (CPSase). CPSase catalyzes the formation of carbamoyl phosphate from the ammonia moiety of glutamine, carbonate, and phosphate donated by ATP, constituting the first step of 2 biosynthetic pathways, one leading to arginine and/or urea and the other to pyrimidine nucleotides. The large subunit (synthetase) binds the substrates ammonia (free or transferred from glutamine from the small subunit), hydrogencarbonate and ATP and carries out an ATP-coupled ligase reaction, activating hydrogencarbonate by forming carboxy phosphate which reacts with ammonia to form carbamoyl phosphate. The sequence is that of Carbamoyl phosphate synthase large chain from Limosilactobacillus fermentum (strain NBRC 3956 / LMG 18251) (Lactobacillus fermentum).